Consider the following 517-residue polypeptide: Maturase K (517 aa).

This sequence belongs to the intron maturase 2 family. MatK subfamily.

It is found in the plastid. It localises to the chloroplast. In terms of biological role, usually encoded in the trnK tRNA gene intron. Probably assists in splicing its own and other chloroplast group II introns. This chain is Maturase K, found in Dracula chimaera.